A 205-amino-acid chain; its full sequence is Large ribosomal subunit protein uL13 (205 aa).

The protein belongs to the universal ribosomal protein uL13 family.

This chain is Large ribosomal subunit protein uL13 (RpL13A), found in Drosophila melanogaster (Fruit fly).